The primary structure comprises 501 residues: Lysine--tRNA ligase (501 aa).

Glu412 and Glu419 together coordinate Mg(2+).

It belongs to the class-II aminoacyl-tRNA synthetase family. Homodimer. Mg(2+) serves as cofactor.

It is found in the cytoplasm. It catalyses the reaction tRNA(Lys) + L-lysine + ATP = L-lysyl-tRNA(Lys) + AMP + diphosphate. The protein is Lysine--tRNA ligase of Chlorobium luteolum (strain DSM 273 / BCRC 81028 / 2530) (Pelodictyon luteolum).